We begin with the raw amino-acid sequence, 207 residues long: Large ribosomal subunit protein bL25 (207 aa).

The tract at residues 182 to 207 (QDLGDESVQEEQAAESAEGESEGSED) is disordered.

It belongs to the bacterial ribosomal protein bL25 family. CTC subfamily. As to quaternary structure, part of the 50S ribosomal subunit; part of the 5S rRNA/L5/L18/L25 subcomplex. Contacts the 5S rRNA. Binds to the 5S rRNA independently of L5 and L18.

Functionally, this is one of the proteins that binds to the 5S RNA in the ribosome where it forms part of the central protuberance. The sequence is that of Large ribosomal subunit protein bL25 from Micrococcus luteus (strain ATCC 4698 / DSM 20030 / JCM 1464 / CCM 169 / CCUG 5858 / IAM 1056 / NBRC 3333 / NCIMB 9278 / NCTC 2665 / VKM Ac-2230) (Micrococcus lysodeikticus).